Consider the following 112-residue polypeptide: DNA-directed RNA polymerases I and III subunit RPAC2 (112 aa).

This sequence belongs to the archaeal Rpo11/eukaryotic RPB11/RPC19 RNA polymerase subunit family. In terms of assembly, component of the RNA polymerase I (Pol I) and RNA polymerase III (Pol III) complexes consisting of at least 13 and 17 subunits, respectively.

The protein resides in the nucleus. In terms of biological role, DNA-dependent RNA polymerase catalyzes the transcription of DNA into RNA using the four ribonucleoside triphosphates as substrates. Common core component of RNA polymerases I and III which synthesize ribosomal RNA precursors and small RNAs, such as 5S rRNA and tRNAs, respectively. This Danio rerio (Zebrafish) protein is DNA-directed RNA polymerases I and III subunit RPAC2 (polr1d).